The following is a 245-amino-acid chain: MASIDLASTPLTATQNVDPNEIKKFEDMASRWWDLEGEFKPLHQINPLRLNYVLEKANGLFGKRVLDVGCGGGILAESMAREGAQVTGLDMGKEPLEVARLHALETGTKLTYIQSTVEAHAEANPHTYDVVTCMEMLEHVPDPLSVIQSCAKLVKPGGHVFFSTLNRNVKSYLFAIVGAEKLLKIVPEGTHDHNKFIRPSELLKMVDHTALQEQGITGLHYNPFTDTYRLGSNVDVNYIVHTRLF.

S-adenosyl-L-methionine contacts are provided by Arg-49, Gly-69, Asp-90, and Met-134.

Belongs to the methyltransferase superfamily. UbiG/COQ3 family.

It catalyses the reaction a 3-demethylubiquinol + S-adenosyl-L-methionine = a ubiquinol + S-adenosyl-L-homocysteine + H(+). It carries out the reaction a 3-(all-trans-polyprenyl)benzene-1,2-diol + S-adenosyl-L-methionine = a 2-methoxy-6-(all-trans-polyprenyl)phenol + S-adenosyl-L-homocysteine + H(+). Its pathway is cofactor biosynthesis; ubiquinone biosynthesis. O-methyltransferase that catalyzes the 2 O-methylation steps in the ubiquinone biosynthetic pathway. The chain is Ubiquinone biosynthesis O-methyltransferase from Vibrio cholerae serotype O1 (strain ATCC 39541 / Classical Ogawa 395 / O395).